The sequence spans 284 residues: Tropomyosin beta chain (284 aa).

Position 1 is an N-acetylmethionine (methionine 1). Residues 1–284 (MEAIKKKMQM…DNALNDITSL (284 aa)) adopt a coiled-coil conformation. 2 stretches are compositionally biased toward basic and acidic residues: residues 22–40 (AEQA…KQLE) and 51–66 (KGTE…SVKE). Residues 22–66 (AEQAEADKKQAEDRCKQLEEEQQGLQKKLKGTEDEVEKYSESVKE) are disordered.

The protein belongs to the tropomyosin family. As to quaternary structure, homodimer. Heterodimer of an alpha (TPM1, TPM3 or TPM4) and a beta (TPM2) chain.

Its subcellular location is the cytoplasm. It localises to the cytoskeleton. Binds to actin filaments in muscle and non-muscle cells. Plays a central role, in association with the troponin complex, in the calcium dependent regulation of vertebrate striated muscle contraction. Smooth muscle contraction is regulated by interaction with caldesmon. In non-muscle cells is implicated in stabilizing cytoskeleton actin filaments. This Gallus gallus (Chicken) protein is Tropomyosin beta chain (TPM2).